A 168-amino-acid polypeptide reads, in one-letter code: Crossover junction endodeoxyribonuclease RuvC (168 aa).

Catalysis depends on residues aspartate 9, glutamate 70, and aspartate 145. Mg(2+) is bound by residues aspartate 9, glutamate 70, and aspartate 145.

The protein belongs to the RuvC family. As to quaternary structure, homodimer which binds Holliday junction (HJ) DNA. The HJ becomes 2-fold symmetrical on binding to RuvC with unstacked arms; it has a different conformation from HJ DNA in complex with RuvA. In the full resolvosome a probable DNA-RuvA(4)-RuvB(12)-RuvC(2) complex forms which resolves the HJ. Mg(2+) is required as a cofactor.

Its subcellular location is the cytoplasm. It catalyses the reaction Endonucleolytic cleavage at a junction such as a reciprocal single-stranded crossover between two homologous DNA duplexes (Holliday junction).. Functionally, the RuvA-RuvB-RuvC complex processes Holliday junction (HJ) DNA during genetic recombination and DNA repair. Endonuclease that resolves HJ intermediates. Cleaves cruciform DNA by making single-stranded nicks across the HJ at symmetrical positions within the homologous arms, yielding a 5'-phosphate and a 3'-hydroxyl group; requires a central core of homology in the junction. The consensus cleavage sequence is 5'-(A/T)TT(C/G)-3'. Cleavage occurs on the 3'-side of the TT dinucleotide at the point of strand exchange. HJ branch migration catalyzed by RuvA-RuvB allows RuvC to scan DNA until it finds its consensus sequence, where it cleaves and resolves the cruciform DNA. The polypeptide is Crossover junction endodeoxyribonuclease RuvC (Chlamydia caviae (strain ATCC VR-813 / DSM 19441 / 03DC25 / GPIC) (Chlamydophila caviae)).